Consider the following 302-residue polypeptide: Bifunctional protein FolD (302 aa).

Residues Gly171–Ser173, Ser196, and Ile237 contribute to the NADP(+) site.

It belongs to the tetrahydrofolate dehydrogenase/cyclohydrolase family. As to quaternary structure, homodimer.

The enzyme catalyses (6R)-5,10-methylene-5,6,7,8-tetrahydrofolate + NADP(+) = (6R)-5,10-methenyltetrahydrofolate + NADPH. The catalysed reaction is (6R)-5,10-methenyltetrahydrofolate + H2O = (6R)-10-formyltetrahydrofolate + H(+). It participates in one-carbon metabolism; tetrahydrofolate interconversion. Functionally, catalyzes the oxidation of 5,10-methylenetetrahydrofolate to 5,10-methenyltetrahydrofolate and then the hydrolysis of 5,10-methenyltetrahydrofolate to 10-formyltetrahydrofolate. This chain is Bifunctional protein FolD, found in Sphingopyxis alaskensis (strain DSM 13593 / LMG 18877 / RB2256) (Sphingomonas alaskensis).